A 248-amino-acid chain; its full sequence is MTRYKAIISYDGSGFYGYQVQPNTRTVQAEIEKALTKMHKGKTVRITASGRTDTGVHAKGQVIHFDSELDITAEKFQKALQVMTPFDISFLTVEEVPDDFHARFGTVGKEYRYVVKRTKIFDPFSRDFALHYPYELDISKMKLASKRLIGEHDFTSFCSARTERDSKVRTLYSIDFYEEDDETLVIAFQGNGFLYNMVRILTGTLLDAGQGRISPDDISKALLARDRQKLISKTAPPQGLYLWRVDYE.

Catalysis depends on Asp-53, which acts as the Nucleophile. Tyr-111 contacts substrate.

Belongs to the tRNA pseudouridine synthase TruA family. Homodimer.

It carries out the reaction uridine(38/39/40) in tRNA = pseudouridine(38/39/40) in tRNA. Functionally, formation of pseudouridine at positions 38, 39 and 40 in the anticodon stem and loop of transfer RNAs. The sequence is that of tRNA pseudouridine synthase A from Listeria monocytogenes serotype 4a (strain HCC23).